A 558-amino-acid chain; its full sequence is Factor VII-activating protease (558 aa).

The N-terminal stretch at methionine 1 to glycine 23 is a signal peptide. The N-linked (GlcNAc...) asparagine glycan is linked to asparagine 54. EGF-like domains follow at residues glutamate 71–glutamine 107, valine 109–serine 146, and valine 148–glutamate 186. Cystine bridges form between cysteine 75-cysteine 86, cysteine 80-cysteine 95, cysteine 97-cysteine 106, cysteine 113-cysteine 123, cysteine 118-cysteine 134, cysteine 136-cysteine 145, cysteine 152-cysteine 163, cysteine 157-cysteine 174, cysteine 176-cysteine 185, cysteine 192-cysteine 274, cysteine 213-cysteine 255, cysteine 244-cysteine 269, cysteine 299-cysteine 433, cysteine 345-cysteine 361, cysteine 353-cysteine 422, cysteine 445-cysteine 513, cysteine 475-cysteine 491, and cysteine 503-cysteine 531. In terms of domain architecture, Kringle spans aspartate 191–cysteine 274. The Peptidase S1 domain occupies isoleucine 312–glutamate 553. Active-site charge relay system residues include histidine 360 and aspartate 409. Serine 507 functions as the Charge relay system in the catalytic mechanism.

Belongs to the peptidase S1 family. As to quaternary structure, heterodimer; disulfide-linked. Heterodimer of a 50 kDa heavy and a 27 kDa light chain linked by a disulfide bond. Proteolytic cleavage at Gly-23 or Leu-27 can give rise to the 50 kDa heavy chain (HC) and cleavage at Arg-311 or Lys-317 can give rise to the 27 kDa light chain (LC). The HC can undergo further proteolytic cleavage giving rise to a 26 kDa fragment. The LC can undergo further proteolytic cleavage at Arg-311 leading to a 17-kDa fragment and at Arg-478 leading to a 8-kDa fragment.

Its subcellular location is the secreted. In terms of biological role, cleaves the alpha-chain at multiple sites and the beta-chain between 'Lys-53' and 'Lys-54' but not the gamma-chain of fibrinogen and therefore does not initiate the formation of the fibrin clot and does not cause the fibrinolysis directly. It does not cleave (activate) prothrombin and plasminogen but converts the inactive single chain urinary plasminogen activator (pro-urokinase) to the active two chain form. Activates coagulation factor VII. May function as a tumor suppressor negatively regulating cell proliferation and cell migration. This is Factor VII-activating protease (HABP2) from Bos taurus (Bovine).